Here is a 183-residue protein sequence, read N- to C-terminus: Acireductone dioxygenase (183 aa).

Fe(2+) is bound by residues histidine 99, histidine 101, glutamate 105, and histidine 144. The Ni(2+) site is built by histidine 99, histidine 101, glutamate 105, and histidine 144.

The protein belongs to the acireductone dioxygenase (ARD) family. As to quaternary structure, monomer. Fe(2+) is required as a cofactor. The cofactor is Ni(2+).

It catalyses the reaction 1,2-dihydroxy-5-(methylsulfanyl)pent-1-en-3-one + O2 = 3-(methylsulfanyl)propanoate + CO + formate + 2 H(+). The catalysed reaction is 1,2-dihydroxy-5-(methylsulfanyl)pent-1-en-3-one + O2 = 4-methylsulfanyl-2-oxobutanoate + formate + 2 H(+). It functions in the pathway amino-acid biosynthesis; L-methionine biosynthesis via salvage pathway; L-methionine from S-methyl-5-thio-alpha-D-ribose 1-phosphate: step 5/6. Its function is as follows. Catalyzes 2 different reactions between oxygen and the acireductone 1,2-dihydroxy-3-keto-5-methylthiopentene (DHK-MTPene) depending upon the metal bound in the active site. Fe-containing acireductone dioxygenase (Fe-ARD) produces formate and 2-keto-4-methylthiobutyrate (KMTB), the alpha-ketoacid precursor of methionine in the methionine recycle pathway. Ni-containing acireductone dioxygenase (Ni-ARD) produces methylthiopropionate, carbon monoxide and formate, and does not lie on the methionine recycle pathway. In Microcystis aeruginosa, this protein is Acireductone dioxygenase.